A 389-amino-acid chain; its full sequence is Succinate--CoA ligase [ADP-forming] subunit beta (389 aa).

One can recognise an ATP-grasp domain in the interval 9–244 (KELLRQFNVP…IDEEDAAEIE (236 aa)). Residues lysine 46, 53 to 55 (GRG), glutamate 99, alanine 102, and glutamate 107 contribute to the ATP site. Residues asparagine 199 and aspartate 213 each coordinate Mg(2+). Residues asparagine 264 and 321–323 (GIM) each bind substrate.

This sequence belongs to the succinate/malate CoA ligase beta subunit family. In terms of assembly, heterotetramer of two alpha and two beta subunits. Mg(2+) is required as a cofactor.

It catalyses the reaction succinate + ATP + CoA = succinyl-CoA + ADP + phosphate. The catalysed reaction is GTP + succinate + CoA = succinyl-CoA + GDP + phosphate. The protein operates within carbohydrate metabolism; tricarboxylic acid cycle; succinate from succinyl-CoA (ligase route): step 1/1. Its function is as follows. Succinyl-CoA synthetase functions in the citric acid cycle (TCA), coupling the hydrolysis of succinyl-CoA to the synthesis of either ATP or GTP and thus represents the only step of substrate-level phosphorylation in the TCA. The beta subunit provides nucleotide specificity of the enzyme and binds the substrate succinate, while the binding sites for coenzyme A and phosphate are found in the alpha subunit. This is Succinate--CoA ligase [ADP-forming] subunit beta from Polynucleobacter necessarius subsp. necessarius (strain STIR1).